Here is a 462-residue protein sequence, read N- to C-terminus: Fumarate hydratase class II (462 aa).

Substrate is bound by residues 97–99 (SGT), 127–130 (HPND), 137–139 (SSN), and threonine 185. Residue histidine 186 is the Proton donor/acceptor of the active site. Serine 316 is an active-site residue. Residues serine 317 and 322–324 (KVN) contribute to the substrate site.

This sequence belongs to the class-II fumarase/aspartase family. Fumarase subfamily. In terms of assembly, homotetramer.

The protein resides in the cytoplasm. The enzyme catalyses (S)-malate = fumarate + H2O. The protein operates within carbohydrate metabolism; tricarboxylic acid cycle; (S)-malate from fumarate: step 1/1. Its function is as follows. Involved in the TCA cycle. Catalyzes the stereospecific interconversion of fumarate to L-malate. The protein is Fumarate hydratase class II of Bacillus cereus (strain ATCC 14579 / DSM 31 / CCUG 7414 / JCM 2152 / NBRC 15305 / NCIMB 9373 / NCTC 2599 / NRRL B-3711).